Here is a 240-residue protein sequence, read N- to C-terminus: UPF0309 protein in nagA 3'region (240 aa).

Residues 31–206 (IVKRLVQGGI…CAQIIEILHE (176 aa)) enclose the SIS domain.

The protein belongs to the UPF0309 family.

The chain is UPF0309 protein in nagA 3'region from Lysinibacillus sphaericus (Bacillus sphaericus).